Reading from the N-terminus, the 255-residue chain is Sulfur carrier protein FdhD (255 aa).

Cysteine 103 serves as the catalytic Cysteine persulfide intermediate.

Belongs to the FdhD family.

The protein localises to the cytoplasm. In terms of biological role, required for formate dehydrogenase (FDH) activity. Acts as a sulfur carrier protein that transfers sulfur from IscS to the molybdenum cofactor prior to its insertion into FDH. The protein is Sulfur carrier protein FdhD of Sulfurisphaera tokodaii (strain DSM 16993 / JCM 10545 / NBRC 100140 / 7) (Sulfolobus tokodaii).